Here is a 60-residue protein sequence, read N- to C-terminus: Putative transmembrane protein 74 (60 aa).

Transmembrane regions (helical) follow at residues phenylalanine 4–phenylalanine 24 and tryptophan 35–glycine 55.

It localises to the host membrane. The protein is Putative transmembrane protein 74 (SIFV0074) of Sulfolobus islandicus filamentous virus (isolate Iceland/Hveragerdi) (SIFV).